The chain runs to 497 residues: UDP-N-acetylmuramoyl-L-alanyl-D-glutamate--2,6-diaminopimelate ligase (497 aa).

Ser33 is a binding site for UDP-N-acetyl-alpha-D-muramoyl-L-alanyl-D-glutamate. Gly119 to Thr125 is a binding site for ATP. UDP-N-acetyl-alpha-D-muramoyl-L-alanyl-D-glutamate is bound by residues Thr161 to Thr162, Ser188, Gln194, and Arg196. At Lys228 the chain carries N6-carboxylysine. Meso-2,6-diaminopimelate contacts are provided by residues Arg390, Asp414–Arg417, Gly465, and Glu469. A Meso-diaminopimelate recognition motif motif is present at residues Asp414 to Arg417.

This sequence belongs to the MurCDEF family. MurE subfamily. It depends on Mg(2+) as a cofactor. In terms of processing, carboxylation is probably crucial for Mg(2+) binding and, consequently, for the gamma-phosphate positioning of ATP.

It localises to the cytoplasm. The enzyme catalyses UDP-N-acetyl-alpha-D-muramoyl-L-alanyl-D-glutamate + meso-2,6-diaminopimelate + ATP = UDP-N-acetyl-alpha-D-muramoyl-L-alanyl-gamma-D-glutamyl-meso-2,6-diaminopimelate + ADP + phosphate + H(+). It functions in the pathway cell wall biogenesis; peptidoglycan biosynthesis. Catalyzes the addition of meso-diaminopimelic acid to the nucleotide precursor UDP-N-acetylmuramoyl-L-alanyl-D-glutamate (UMAG) in the biosynthesis of bacterial cell-wall peptidoglycan. This Synechococcus elongatus (strain ATCC 33912 / PCC 7942 / FACHB-805) (Anacystis nidulans R2) protein is UDP-N-acetylmuramoyl-L-alanyl-D-glutamate--2,6-diaminopimelate ligase.